A 169-amino-acid chain; its full sequence is Gametocyte-specific factor 1-like (169 aa).

2 CHHC U11-48K-type zinc fingers span residues 6–33 (LETC…RRKN) and 40–67 (MASC…VNKS). Positions 9, 15, 25, 29, 43, 49, 59, and 63 each coordinate Zn(2+). 2 disordered regions span residues 67–103 (STME…LPNP) and 131–169 (SDTR…LLKA). Basic and acidic residues predominate over residues 131-158 (SDTRESETDDHNPIPDCPRRRSSDRESE).

The protein belongs to the UPF0224 (FAM112) family.

This chain is Gametocyte-specific factor 1-like (GTSF1L), found in Bos taurus (Bovine).